The sequence spans 479 residues: Long-chain alcohol oxidase (479 aa).

Positions 14-183 (QILRPSAAYT…LAVRIRCREQ (170 aa)) constitute an FAD-binding PCMH-type domain. At H49 the chain carries Pros-8alpha-FAD histidine. Residues T113, G116, 120–123 (TGTH), and I173 each bind FAD. The helical transmembrane segment at 241 to 258 (LYWLGTMDYGLILQILFL) threads the bilayer. FAD is bound by residues R369 and H425.

The protein belongs to the oxygen-dependent FAD-linked oxidoreductase family. FAD serves as cofactor.

The protein resides in the cell membrane. It catalyses the reaction a long-chain primary fatty alcohol + O2 = a long-chain fatty aldehyde + H2O2. The enzyme catalyses dodecan-1-ol + O2 = dodecanal + H2O2. It carries out the reaction tetradecan-1-ol + O2 = tetradecanal + H2O2. The catalysed reaction is octan-1-ol + O2 = octanal + H2O2. It catalyses the reaction decan-1-ol + O2 = decanal + H2O2. It participates in lipid metabolism; fatty acid metabolism. In terms of biological role, in vitro catalyzes the oxidation of a range of fatty alcohols having a carbon chain length of six and above, with a reduction of O2 to H2O2. Shows the highest activity with 1-dodecanol. Is likely involved in lipid metabolism. The chain is Long-chain alcohol oxidase from Uncultured marine euryarchaeote.